A 148-amino-acid polypeptide reads, in one-letter code: Snaclec convulxin subunit beta (148 aa).

A signal peptide spans 1–23; sequence MGRFIFVSFGLLVVFLSLSGSEA. Disulfide bonds link Cys-27–Cys-38, Cys-55–Cys-144, and Cys-121–Cys-136. Positions 34–148 constitute a C-type lectin domain; that stretch reads YDRYCYKVFK…TYSFVCKFEA (115 aa).

This sequence belongs to the snaclec family. In terms of assembly, tetramer of heterodimers of alpha and beta subunits (alphabeta)(4); disulfide-linked. Expressed by the venom gland.

It is found in the secreted. Its function is as follows. Snake venom lectin that activates platelets by binding to the platelet collagen receptor glycoprotein VI (GP6). The indirect activation of integrin alpha-IIb/beta-3 (ITGA2B/ITGB3) also induced by the toxin is upstream the cytoskeletal translocation of GPIb, FcRgamma (FCER1G) and 14-3-3zeta (YWHAZ). In Crotalus durissus terrificus (South American rattlesnake), this protein is Snaclec convulxin subunit beta.